A 358-amino-acid chain; its full sequence is Peroxidase 12 (358 aa).

An N-terminal signal peptide occupies residues 1–31 (MTKAYSTRVLTFLILISLMAVTLNLFPTVEA). Intrachain disulfides connect C53-C134, C86-C91, C140-C335, and C220-C247. The active-site Proton acceptor is the H84. Ca(2+)-binding residues include D85, V88, G90, E92, and S94. P183 contacts substrate. Residues N188 and N202 are each glycosylated (N-linked (GlcNAc...) asparagine). Residue H213 participates in heme b binding. A Ca(2+)-binding site is contributed by T214. N251 carries an N-linked (GlcNAc...) asparagine glycan. The Ca(2+) site is built by D259, S262, and D267. N334 carries N-linked (GlcNAc...) asparagine glycosylation.

The protein belongs to the peroxidase family. Classical plant (class III) peroxidase subfamily. Requires heme b as cofactor. Ca(2+) is required as a cofactor. Expressed in roots and leaves.

Its subcellular location is the secreted. The protein localises to the vacuole. The catalysed reaction is 2 a phenolic donor + H2O2 = 2 a phenolic radical donor + 2 H2O. Functionally, removal of H(2)O(2), oxidation of toxic reductants, biosynthesis and degradation of lignin, suberization, auxin catabolism, response to environmental stresses such as wounding, pathogen attack and oxidative stress. These functions might be dependent on each isozyme/isoform in each plant tissue. Its function is as follows. Exhibits a Ca(2+)-pectate binding affinity which could be interpreted in vivo as a specificity to interact with the pectic structure of the cell wall. This chain is Peroxidase 12 (PER12), found in Arabidopsis thaliana (Mouse-ear cress).